We begin with the raw amino-acid sequence, 162 residues long: Ribose-5-phosphate isomerase B (162 aa).

D-ribulose 5-phosphate-binding positions include 11–12 (DH) and 70–74 (GSGNG). Glutamate 75 acts as the Proton acceptor in catalysis. The active-site Proton donor is histidine 102. Asparagine 103, arginine 113, arginine 137, and arginine 141 together coordinate D-ribulose 5-phosphate.

This sequence belongs to the LacAB/RpiB family. As to quaternary structure, homodimer.

The enzyme catalyses aldehydo-D-ribose 5-phosphate = D-ribulose 5-phosphate. Its pathway is carbohydrate degradation; pentose phosphate pathway; D-ribose 5-phosphate from D-ribulose 5-phosphate (non-oxidative stage): step 1/1. Functionally, catalyzes the interconversion of ribulose-5-P and ribose-5-P. This is Ribose-5-phosphate isomerase B from Mycobacterium bovis (strain ATCC BAA-935 / AF2122/97).